The sequence spans 386 residues: MMAKNCNLVSVLCVFLVLTLFNKPITVAGQNIPAVGLFTFGDSNFDAGNKQTLTKTLLPQTFWPYGKSRDDPNGKFSDGLIAPDFLAKFMRIPIVIPPALQPNVNVSRGASFAVADATLLGAPVESLTLNQQVRKFNQMKAANWNDDFVKKSVFMIYIGANDYLNFTKNNPNADASTQQAFVTSVTNKLKNDISLLYSSGASKFVIQTLAPLGCLPIVRQEFNTGMDQCYEKLNDLAKQHNEKIGPMLNELARTAPASAPFQFTVFDFYNAILTRTQRNQNFRFFVTNASCCGVGTHDAYGCGFPNVHSRLCEYQRSYLFFDGRHNTEKAQEMFGHLLFGADTNVIQPMNIRELVVYPADEPMRESWVPPTSATVQLRESRGYEYY.

Positions Met1 to Gly29 are cleaved as a signal peptide. Ser43 serves as the catalytic Nucleophile. N-linked (GlcNAc...) asparagine glycans are attached at residues Asn105, Asn165, and Asn288. Active-site residues include Asp322 and His325.

This sequence belongs to the 'GDSL' lipolytic enzyme family. As to quaternary structure, part of the PYK10 complex. Interacts with MVP1. Expressed mainly in roots.

It is found in the endoplasmic reticulum. Its function is as follows. Involved in the control of the PYK10 complex size and possibly substrate specificity. May be exported from the endoplasmic reticulum upon interaction with MVP1. The sequence is that of Inactive GDSL esterase/lipase-like protein 23 (GLL23) from Arabidopsis thaliana (Mouse-ear cress).